Reading from the N-terminus, the 611-residue chain is DNA mismatch repair protein MutL (611 aa).

It belongs to the DNA mismatch repair MutL/HexB family.

Its function is as follows. This protein is involved in the repair of mismatches in DNA. It is required for dam-dependent methyl-directed DNA mismatch repair. May act as a 'molecular matchmaker', a protein that promotes the formation of a stable complex between two or more DNA-binding proteins in an ATP-dependent manner without itself being part of a final effector complex. In Bartonella bacilliformis (strain ATCC 35685 / KC583 / Herrer 020/F12,63), this protein is DNA mismatch repair protein MutL.